The chain runs to 353 residues: Photosystem II D2 protein (353 aa).

Thr2 is modified (N-acetylthreonine). Thr2 is subject to Phosphothreonine. A helical membrane pass occupies residues 41–61; the sequence is CAYFALGGWFTGTTFVTSWYT. Residue His118 coordinates chlorophyll a. The helical transmembrane segment at 125 to 141 threads the bilayer; sequence GFMLRQFELARSVQLRP. Residues Gln130 and Asn143 each coordinate pheophytin a. A helical transmembrane segment spans residues 153–166; it reads VFVSVFLIYPLGQS. His198 serves as a coordination point for chlorophyll a. A helical membrane pass occupies residues 208 to 228; that stretch reads AALLCAIHGATVENTLFEDGD. Residues His215 and Phe262 each coordinate a plastoquinone. Position 215 (His215) interacts with Fe cation. His269 serves as a coordination point for Fe cation. Residues 279-295 form a helical membrane-spanning segment; sequence GLWMSALGVVGLALNLR.

Belongs to the reaction center PufL/M/PsbA/D family. PSII is composed of 1 copy each of membrane proteins PsbA, PsbB, PsbC, PsbD, PsbE, PsbF, PsbH, PsbI, PsbJ, PsbK, PsbL, PsbM, PsbT, PsbX, PsbY, PsbZ, Psb30/Ycf12, at least 3 peripheral proteins of the oxygen-evolving complex and a large number of cofactors. It forms dimeric complexes. Requires The D1/D2 heterodimer binds P680, chlorophylls that are the primary electron donor of PSII, and subsequent electron acceptors. It shares a non-heme iron and each subunit binds pheophytin, quinone, additional chlorophylls, carotenoids and lipids. There is also a Cl(-1) ion associated with D1 and D2, which is required for oxygen evolution. The PSII complex binds additional chlorophylls, carotenoids and specific lipids. as cofactor.

The protein localises to the plastid. Its subcellular location is the chloroplast thylakoid membrane. It carries out the reaction 2 a plastoquinone + 4 hnu + 2 H2O = 2 a plastoquinol + O2. Functionally, photosystem II (PSII) is a light-driven water:plastoquinone oxidoreductase that uses light energy to abstract electrons from H(2)O, generating O(2) and a proton gradient subsequently used for ATP formation. It consists of a core antenna complex that captures photons, and an electron transfer chain that converts photonic excitation into a charge separation. The D1/D2 (PsbA/PsbD) reaction center heterodimer binds P680, the primary electron donor of PSII as well as several subsequent electron acceptors. D2 is needed for assembly of a stable PSII complex. The chain is Photosystem II D2 protein from Populus trichocarpa (Western balsam poplar).